Consider the following 1028-residue polypeptide: Golgin subfamily A member 2 (1028 aa).

The segment at 1–112 is disordered; it reads MADQNRQIKL…NRPLSSTESL (112 aa). Residues 40 to 60 show a composition bias toward basic and acidic residues; sequence KGDQTDAPADRRSPENERVDV. The segment covering 74 to 87 has biased composition (polar residues); sequence NPASAINTDNSAPQ. Coiled coils occupy residues 162 to 200, 233 to 388, 414 to 690, 738 to 769, and 799 to 840; these read NTQL…EQGA, ARQK…YAVQ, RDST…LLNG, LSRV…LTAL, and HEAL…LSGE. The interval 259-280 is disordered; the sequence is RTLSSVSTQQKQHERHNKELEK. A disordered region spans residues 756–791; sequence RRIHQDTRQQLTALSHDHHHHHHHEPHSTCAETDGS. Positions 944–981 are disordered; the sequence is AMDVSSSPQSSTAEIQSQSSERPAADPISSPSLRPQED. Polar residues predominate over residues 945–964; the sequence is MDVSSSPQSSTAEIQSQSSE.

This sequence belongs to the GOLGA2 family.

It localises to the golgi apparatus. It is found in the cis-Golgi network membrane. Its subcellular location is the endoplasmic reticulum-Golgi intermediate compartment membrane. The protein localises to the cytoplasm. The protein resides in the cytoskeleton. It localises to the spindle pole. Peripheral membrane component of the cis-Golgi stack that acts as a membrane skeleton that maintains the structure of the Golgi apparatus, and as a vesicle thether that facilitates vesicle fusion to the Golgi membrane. Required for normal protein transport from the endoplasmic reticulum to the Golgi apparatus and the cell membrane. Plays a central role in mitotic Golgi disassembly. Also plays a key role in spindle pole assembly and centrosome organization. It probably promotes mitotic spindle pole assembly by activating assembly factors to nucleate microtubules around the Golgi and capture them to couple mitotic membranes to the spindle. Also required for the Golgi ribbon formation and glycosylation of membrane and secretory proteins. The chain is Golgin subfamily A member 2 from Danio rerio (Zebrafish).